Here is a 153-residue protein sequence, read N- to C-terminus: Aspartate carbamoyltransferase regulatory chain (153 aa).

Residues cysteine 109, cysteine 114, cysteine 138, and cysteine 141 each contribute to the Zn(2+) site.

Belongs to the PyrI family. As to quaternary structure, contains catalytic and regulatory chains. The cofactor is Zn(2+).

Involved in allosteric regulation of aspartate carbamoyltransferase. The protein is Aspartate carbamoyltransferase regulatory chain of Cronobacter sakazakii (strain ATCC BAA-894) (Enterobacter sakazakii).